The following is a 574-amino-acid chain: Frizzled and smoothened-like protein G (574 aa).

Residues 1–19 form the signal peptide; it reads MKSIIFITFFIFFLKKLNG. At 20–246 the chain is on the extracellular side; it reads LPNGYGVGLV…EKWNQIENLS (227 aa). The 152-residue stretch at 30-181 folds into the FZ domain; it reads DPNGQCMNYI…GLYEVPCFNP (152 aa). Disulfide bonds link C35/C109, C48/C102, C91/C138, and C127/C178. N-linked (GlcNAc...) asparagine glycans are attached at residues N119, N161, N187, N206, N233, and N244. A helical membrane pass occupies residues 247–267; the sequence is KVLSTISFVCSIYNILSFGIL. Over 268 to 273 the chain is Cytoplasmic; it reads KKKKTK. A helical membrane pass occupies residues 274 to 294; the sequence is YTICISALSASVALINLGDII. Residues 295 to 324 lie on the Extracellular side of the membrane; it reads KIGVGYEKVLCPEPGRFATQVDDPLCGLTA. A helical membrane pass occupies residues 325-345; it reads ALFHVGICSTVLWTTTMAIYL. Residues 346–358 lie on the Cytoplasmic side of the membrane; sequence YSAIKNIKLFKFR. Residues 359–379 traverse the membrane as a helical segment; the sequence is YFIIFNTGFSLTSLIIAASAS. Residues 380–401 lie on the Extracellular side of the membrane; that stretch reads KFEAGTGSIECWIRDRWYSICL. A helical transmembrane segment spans residues 402–422; the sequence is FWLPCGICLLIGTICIASVIV. At 423-445 the chain is on the cytoplasmic side; sequence EIYKVSKNIKLSESETIMRQIKP. A helical membrane pass occupies residues 446–466; that stretch reads IISVILVSGSFTYLFIIFFDI. At 467 to 502 the chain is on the extracellular side; it reads ERNFGGYRSAVTDYVLCLLNSTDNGIECHTSGPSYN. N-linked (GlcNAc...) asparagine glycosylation occurs at N486. A helical membrane pass occupies residues 503 to 523; sequence PYFMFYFFMRFFGILFFLIYG. Topologically, residues 524–574 are cytoplasmic; sequence TSKNARDSWYELFIKIKVSLSETSSTISNNSGGGSSQQKQQQQNEIKLEKI. Positions 550 to 568 are enriched in low complexity; the sequence is ISNNSGGGSSQQKQQQQNE. Residues 550-574 form a disordered region; that stretch reads ISNNSGGGSSQQKQQQQNEIKLEKI.

It belongs to the G-protein coupled receptor Fz/Smo family.

Its subcellular location is the membrane. The sequence is that of Frizzled and smoothened-like protein G (fslG) from Dictyostelium discoideum (Social amoeba).